A 241-amino-acid chain; its full sequence is Phosphoribosylaminoimidazole-succinocarboxamide synthase (241 aa).

The protein belongs to the SAICAR synthetase family.

The enzyme catalyses 5-amino-1-(5-phospho-D-ribosyl)imidazole-4-carboxylate + L-aspartate + ATP = (2S)-2-[5-amino-1-(5-phospho-beta-D-ribosyl)imidazole-4-carboxamido]succinate + ADP + phosphate + 2 H(+). It participates in purine metabolism; IMP biosynthesis via de novo pathway; 5-amino-1-(5-phospho-D-ribosyl)imidazole-4-carboxamide from 5-amino-1-(5-phospho-D-ribosyl)imidazole-4-carboxylate: step 1/2. The chain is Phosphoribosylaminoimidazole-succinocarboxamide synthase from Lacticaseibacillus casei (strain BL23) (Lactobacillus casei).